We begin with the raw amino-acid sequence, 147 residues long: MAVQFILCFNKQGVVRLVRWFDVHSSDPQRSQDAIAQIYRLISSRDHKHQSNFVEFSDSTKLIYRRYAGLYFVMGVDLLDDEPIYLCHIHLFVEVLDAFFGNVCELDIVFNFYKVYMIMDEMFIGGEIQEISKDMLLERLSILDRLD.

Belongs to the adaptor complexes small subunit family. In terms of assembly, adaptor protein complex 2 (AP-2) is a heterotetramer composed of two large adaptins (alpha-type subunit APL3 and beta-type subunit APL1), a medium chain (mu-type subunit APM4) and a small adaptin (sigma-type subunit APS2). Interacts with APL1.

It is found in the cell membrane. It localises to the membrane. The protein localises to the coated pit. Its function is as follows. Component of the adaptor complexes which link clathrin to receptors in coated vesicles. Clathrin-associated protein complexes are believed to interact with the cytoplasmic tails of membrane proteins, leading to their selection and concentration. The chain is AP-2 complex subunit sigma (APS2) from Saccharomyces cerevisiae (strain ATCC 204508 / S288c) (Baker's yeast).